The primary structure comprises 372 residues: Cobalt-precorrin-5B C(1)-methyltransferase (372 aa).

It belongs to the CbiD family.

It carries out the reaction Co-precorrin-5B + S-adenosyl-L-methionine = Co-precorrin-6A + S-adenosyl-L-homocysteine. Its pathway is cofactor biosynthesis; adenosylcobalamin biosynthesis; cob(II)yrinate a,c-diamide from sirohydrochlorin (anaerobic route): step 6/10. Catalyzes the methylation of C-1 in cobalt-precorrin-5B to form cobalt-precorrin-6A. In Geobacillus thermodenitrificans (strain NG80-2), this protein is Cobalt-precorrin-5B C(1)-methyltransferase.